Here is a 343-residue protein sequence, read N- to C-terminus: Glycerol-3-phosphate dehydrogenase [NAD(P)+] (343 aa).

4 residues coordinate NADPH: serine 22, tyrosine 23, histidine 43, and lysine 117. Sn-glycerol 3-phosphate is bound by residues lysine 117, glycine 146, and threonine 148. An NADPH-binding site is contributed by alanine 150. 5 residues coordinate sn-glycerol 3-phosphate: lysine 202, aspartate 255, serine 265, arginine 266, and asparagine 267. Catalysis depends on lysine 202, which acts as the Proton acceptor. Arginine 266 contacts NADPH. The NADPH site is built by valine 290 and glutamate 292.

It belongs to the NAD-dependent glycerol-3-phosphate dehydrogenase family.

Its subcellular location is the cytoplasm. The enzyme catalyses sn-glycerol 3-phosphate + NAD(+) = dihydroxyacetone phosphate + NADH + H(+). It carries out the reaction sn-glycerol 3-phosphate + NADP(+) = dihydroxyacetone phosphate + NADPH + H(+). The protein operates within membrane lipid metabolism; glycerophospholipid metabolism. Its function is as follows. Catalyzes the reduction of the glycolytic intermediate dihydroxyacetone phosphate (DHAP) to sn-glycerol 3-phosphate (G3P), the key precursor for phospholipid synthesis. This Aliivibrio fischeri (strain ATCC 700601 / ES114) (Vibrio fischeri) protein is Glycerol-3-phosphate dehydrogenase [NAD(P)+].